Reading from the N-terminus, the 204-residue chain is N-(5'-phosphoribosyl)anthranilate isomerase (204 aa).

Belongs to the TrpF family.

It carries out the reaction N-(5-phospho-beta-D-ribosyl)anthranilate = 1-(2-carboxyphenylamino)-1-deoxy-D-ribulose 5-phosphate. Its pathway is amino-acid biosynthesis; L-tryptophan biosynthesis; L-tryptophan from chorismate: step 3/5. This chain is N-(5'-phosphoribosyl)anthranilate isomerase, found in Bacillus cereus (strain G9842).